An 88-amino-acid polypeptide reads, in one-letter code: Small ribosomal subunit protein bS20 (88 aa).

This sequence belongs to the bacterial ribosomal protein bS20 family.

Its function is as follows. Binds directly to 16S ribosomal RNA. This Mycoplasmopsis synoviae (strain 53) (Mycoplasma synoviae) protein is Small ribosomal subunit protein bS20.